Here is a 455-residue protein sequence, read N- to C-terminus: Venom prothrombin activator hopsarin-D (455 aa).

Residues 1-20 (MAPQLLLCLILTFLWSVPEA) form the signal peptide. Positions 21–40 (ESNVFLKSKVANRFLQRTKR) are excised as a propeptide. The 46-residue stretch at 41 to 86 (SNSLFEEIRPGNIERECIEEKCSKEEAREVFEDNEKTETFWNVYVD) folds into the Gla domain. A 4-carboxyglutamate mark is found at Glu-46, Glu-47, Glu-54, Glu-56, Glu-59, Glu-60, Glu-65, Glu-66, Glu-69, Glu-72, and Glu-75. A disulfide bridge connects residues Cys-57 and Cys-62. The 36-residue stretch at 86-121 (DGDQCSSNPCHYHGTCKDGIGSYTCTCLPNYEGKNC) folds into the EGF-like 1; calcium-binding domain. 10 disulfides stabilise this stretch: Cys-90/Cys-101, Cys-95/Cys-110, Cys-112/Cys-121, Cys-129/Cys-140, Cys-136/Cys-149, Cys-151/Cys-164, Cys-172/Cys-328, Cys-236/Cys-252, Cys-376/Cys-390, and Cys-401/Cys-429. Ser-92 is a glycosylation site (O-linked (Hex...) serine). The EGF-like 2 domain maps to 129 to 164 (CRAFNGNCWHFCKRVQSETQCSCAESYRLGVDGHSC). Residues 182–209 (REASLPDFVQSQKATLLKKSDNPSPDIR) constitute a propeptide, activation peptide. In terms of domain architecture, Peptidase S1 spans 210–453 (IVNGMDSKLG…FIPWIKKIMS (244 aa)). Residue His-251 is the Charge relay system of the active site. A glycan (N-linked (GlcNAc...) asparagine) is linked at Asn-254. Asp-308 (charge relay system) is an active-site residue. Ser-405 acts as the Charge relay system in catalysis.

The protein belongs to the peptidase S1 family. Snake venom subfamily. In terms of assembly, heterodimer of a light chain and a heavy chain; disulfide-linked. Post-translationally, the vitamin K-dependent, enzymatic carboxylation of some glutamate residues allows the modified protein to bind calcium. In terms of tissue distribution, expressed by the venom gland.

It is found in the secreted. The catalysed reaction is Selective cleavage of Arg-|-Thr and then Arg-|-Ile bonds in prothrombin to form thrombin.. In terms of biological role, snake prothrombin activator that attacks the hemostatic system of prey. This protein is functionally similar to blood coagulation factor Xa. The procoagulant activity of hopsarin-D is approximately 10-fold lower than that of trocarin-D and FXa. The polypeptide is Venom prothrombin activator hopsarin-D (Hoplocephalus stephensii (Stephens's banded snake)).